The sequence spans 359 residues: uncharacterized protein (359 aa).

This is an uncharacterized protein from Treponema pallidum (strain Nichols).